Reading from the N-terminus, the 228-residue chain is Probable septum site-determining protein MinC (228 aa).

It belongs to the MinC family. As to quaternary structure, interacts with MinD and FtsZ.

In terms of biological role, cell division inhibitor that blocks the formation of polar Z ring septums. Rapidly oscillates between the poles of the cell to destabilize FtsZ filaments that have formed before they mature into polar Z rings. Prevents FtsZ polymerization. This Bacillus cereus (strain B4264) protein is Probable septum site-determining protein MinC.